We begin with the raw amino-acid sequence, 216 residues long: Superoxide dismutase [Cu-Zn] 2, chloroplastic (216 aa).

The N-terminal 62 residues, 1–62 (MAATNTILAF…APSKALTVVS (62 aa)), are a transit peptide targeting the chloroplast. 3 residues coordinate Cu cation: histidine 108, histidine 110, and histidine 125. A disulfide bond links cysteine 119 and cysteine 208. Positions 125, 133, 142, and 145 each coordinate Zn(2+). Histidine 182 contacts Cu cation.

This sequence belongs to the Cu-Zn superoxide dismutase family. As to quaternary structure, homotetramer. Cu cation serves as cofactor. Requires Zn(2+) as cofactor. As to expression, expressed in leaves (at protein level). The spatial localization is regulated by miR398-mediated silencing. Mostly present in flowers, old rosette leaves and inflorescence, and, to a lower extent, in cauline leaves, stems and roots.

It localises to the plastid. The protein resides in the chloroplast. It catalyses the reaction 2 superoxide + 2 H(+) = H2O2 + O2. Its function is as follows. Destroys radicals which are normally produced within the cells and which are toxic to biological systems. Mediates tolerance to stress, including photo-oxidative stress. This is Superoxide dismutase [Cu-Zn] 2, chloroplastic (CSD2) from Arabidopsis thaliana (Mouse-ear cress).